The sequence spans 103 residues: Iron-sulfur cluster assembly protein CyaY (103 aa).

It belongs to the frataxin family.

Functionally, involved in iron-sulfur (Fe-S) cluster assembly. May act as a regulator of Fe-S biogenesis. In Rickettsia africae (strain ESF-5), this protein is Iron-sulfur cluster assembly protein CyaY.